Consider the following 202-residue polypeptide: Pycsar effector protein PtPycTM (202 aa).

The next 3 membrane-spanning stretches (helical) occupy residues 60–80 (GVVL…AADI), 85–105 (LVIL…AVLA), and 181–201 (ILVG…VALG).

Its subcellular location is the cell membrane. In terms of biological role, pycsar (pyrimidine cyclase system for antiphage resistance) provides immunity against bacteriophage. The pyrimidine cyclase (PycC) synthesizes cyclic nucleotides in response to infection; these serve as specific second messenger signals. The signals activate the adjacent effector, leading to bacterial cell death and abortive phage infection. A clade D Pycsar system. Its function is as follows. The effector gene of a two-gene Pycsar system. Expression of this and adjacent uridylate cyclase PtPycC (AC A0A4V2JTK3) probably confers resistance to bacteriophage. The genes are probably only expressed in response to bacteriophage infection. Probably only responds to cUMP (produced by its cognate NTP cyclase), acts by impairing membrane integrity. This is Pycsar effector protein PtPycTM from Propioniciclava tarda.